Here is a 1034-residue protein sequence, read N- to C-terminus: Ice nucleation protein InaU (1034 aa).

An octapeptide periodicity region spans residues 162-993 (ATYGSTLSGT…LTAGENSVLI (832 aa)). Disordered regions lie at residues 260-287 (YGST…KGSD), 311-342 (TQTA…GYGS), 356-383 (YGST…KGSD), 407-438 (TQTA…GYGS), 452-480 (YGST…GSDL), and 570-597 (AREG…TGYG). 6 stretches are compositionally biased toward polar residues: residues 261 to 286 (GSTQ…QKGS), 311 to 334 (TQTA…QKGS), 357 to 382 (GSTQ…QKGS), 407 to 430 (TQTA…QKGS), 453 to 480 (GSTQ…GSDL), and 580 to 592 (YGST…NSDL).

It belongs to the bacterial ice nucleation protein family.

It is found in the cell outer membrane. Ice nucleation proteins enable bacteria to nucleate crystallization in supercooled water. The chain is Ice nucleation protein InaU (inaU) from Pantoea ananas (Erwinia uredovora).